We begin with the raw amino-acid sequence, 410 residues long: Arginine biosynthesis bifunctional protein ArgJ (410 aa).

Positions 158, 184, 195, 282, 405, and 410 each coordinate substrate. The active-site Nucleophile is the T195.

The protein belongs to the ArgJ family. As to quaternary structure, heterotetramer of two alpha and two beta chains.

The protein localises to the cytoplasm. The enzyme catalyses N(2)-acetyl-L-ornithine + L-glutamate = N-acetyl-L-glutamate + L-ornithine. It carries out the reaction L-glutamate + acetyl-CoA = N-acetyl-L-glutamate + CoA + H(+). It participates in amino-acid biosynthesis; L-arginine biosynthesis; L-ornithine and N-acetyl-L-glutamate from L-glutamate and N(2)-acetyl-L-ornithine (cyclic): step 1/1. It functions in the pathway amino-acid biosynthesis; L-arginine biosynthesis; N(2)-acetyl-L-ornithine from L-glutamate: step 1/4. Functionally, catalyzes two activities which are involved in the cyclic version of arginine biosynthesis: the synthesis of N-acetylglutamate from glutamate and acetyl-CoA as the acetyl donor, and of ornithine by transacetylation between N(2)-acetylornithine and glutamate. This Bartonella henselae (strain ATCC 49882 / DSM 28221 / CCUG 30454 / Houston 1) (Rochalimaea henselae) protein is Arginine biosynthesis bifunctional protein ArgJ.